A 188-amino-acid polypeptide reads, in one-letter code: Elongation factor P (188 aa).

This sequence belongs to the elongation factor P family.

It is found in the cytoplasm. The protein operates within protein biosynthesis; polypeptide chain elongation. Involved in peptide bond synthesis. Stimulates efficient translation and peptide-bond synthesis on native or reconstituted 70S ribosomes in vitro. Probably functions indirectly by altering the affinity of the ribosome for aminoacyl-tRNA, thus increasing their reactivity as acceptors for peptidyl transferase. The sequence is that of Elongation factor P from Cellvibrio japonicus (strain Ueda107) (Pseudomonas fluorescens subsp. cellulosa).